The following is a 124-amino-acid chain: Replication restart protein PriB (124 aa).

Positions 12-112 (IDNCLTLTGI…LHTEQIEFID (101 aa)) constitute an SSB domain.

It belongs to the PriB family. As to quaternary structure, homodimer. Interacts with PriA and DnaT. Component of the replication restart primosome. Primosome assembly occurs via a 'hand-off' mechanism. PriA binds to replication forks, subsequently PriB then DnaT bind; DnaT then displaces ssDNA to generate the helicase loading substrate.

Its function is as follows. Involved in the restart of stalled replication forks, which reloads the replicative helicase on sites other than the origin of replication; the PriA-PriB pathway is the major replication restart pathway. During primosome assembly it facilitates complex formation between PriA and DnaT on DNA; stabilizes PriA on DNA. Stimulates the DNA unwinding activity of PriA helicase. This chain is Replication restart protein PriB, found in Haemophilus ducreyi (strain 35000HP / ATCC 700724).